The sequence spans 392 residues: Integrin-linked kinase-associated serine/threonine phosphatase 2C (392 aa).

Met1 is subject to N-acetylmethionine. The tract at residues 1–91 (MDLFGDLPEP…PEEEKNGGEE (91 aa)) is disordered. Low complexity predominate over residues 31-40 (DLPPTSSTDS). Polar residues predominate over residues 59–70 (SGSLATSGSQVV). Residues 72–91 (NEGKGAKRKAPEEEKNGGEE) show a composition bias toward basic and acidic residues. The region spanning 108-390 (KGYVAERKGE…DNVTVMVVRI (283 aa)) is the PPM-type phosphatase domain. Residues Asp152 and Gly153 each coordinate Mn(2+). Lys210 bears the N6-acetyllysine mark. Residues Asp326 and Asp381 each coordinate Mn(2+).

This sequence belongs to the PP2C family. As to quaternary structure, interacts with ILK. Mg(2+) is required as a cofactor. Requires Mn(2+) as cofactor. As to expression, widely expressed. Highest expression observed in kidney, liver and muscle.

Its subcellular location is the cytoplasm. The catalysed reaction is O-phospho-L-seryl-[protein] + H2O = L-seryl-[protein] + phosphate. It catalyses the reaction O-phospho-L-threonyl-[protein] + H2O = L-threonyl-[protein] + phosphate. In terms of biological role, protein phosphatase that may play a role in regulation of cell cycle progression via dephosphorylation of its substrates whose appropriate phosphorylation states might be crucial for cell proliferation. Selectively associates with integrin linked kinase (ILK), to modulate cell adhesion and growth factor signaling. Inhibits the ILK-GSK3B signaling axis and may play an important role in inhibiting oncogenic transformation. In Rattus norvegicus (Rat), this protein is Integrin-linked kinase-associated serine/threonine phosphatase 2C (Ilkap).